We begin with the raw amino-acid sequence, 156 residues long: uncharacterized protein (156 aa).

Positions 1–12 (MSARPSLPPLPA) are enriched in pro residues. Disordered stretches follow at residues 1–89 (MSAR…PPPA) and 129–156 (PLSPPAKRRGIRTWGHPSYLTPSPTMRD). Basic and acidic residues predominate over residues 49-67 (ARAEEAGGEEGKREAEAWT).

This is an uncharacterized protein from Homo sapiens (Human).